Consider the following 208-residue polypeptide: High frequency lysogenization protein HflD homolog (208 aa).

This sequence belongs to the HflD family.

The protein resides in the cytoplasm. The protein localises to the cell inner membrane. The chain is High frequency lysogenization protein HflD homolog from Pseudomonas putida (strain ATCC 700007 / DSM 6899 / JCM 31910 / BCRC 17059 / LMG 24140 / F1).